The sequence spans 787 residues: Patatin-like phospholipase domain-containing protein OOU_Y34scaffold00095g16.3 (787 aa).

Disordered regions lie at residues 47–69 (APDT…ARSF) and 137–164 (KVVG…PGRR). The span at 59 to 69 (ASPRSPSARSF) shows a compositional bias: low complexity. Over residues 144–157 (HRQKKSSRRRKRSK) the composition is skewed to basic residues. The helical transmembrane segment at 180–200 (WPFLLIVGAWIVGLAVTYLFT) threads the bilayer. The PNPLA domain occupies 375–566 (LCLSGGASFA…RTDIPIRALN (192 aa)). The GXSXG motif lies at 406-410 (GTSGG). The active-site Nucleophile is serine 408. The active-site Proton acceptor is aspartate 553. Positions 745 to 787 (GTDEEITTNDEMEFASDEKAVLTEDEGQFDGVTDNTEGSPLLK) are disordered. Over residues 746–759 (TDEEITTNDEMEFA) the composition is skewed to acidic residues. The segment covering 777–787 (TDNTEGSPLLK) has biased composition (polar residues).

It belongs to the PLPL family.

The protein localises to the membrane. Its function is as follows. Probable lipid hydrolase. This chain is Patatin-like phospholipase domain-containing protein OOU_Y34scaffold00095g16.3, found in Pyricularia oryzae (strain Y34) (Rice blast fungus).